Consider the following 425-residue polypeptide: MTQTKEPLTKAESAELEQEIELSQYINTDDIDDDDIDVEDLEQEVAATEGKEKKVRKIRKDAVKKKPYTEDSIRIYLQEIGRIRLLRAEEEIELARQIADLLELELIRDNLTLQLERQPSELEWGKQVWKLETAKQRLVGDKKKEPKKKDIDSYLANPDNELSLENEWSQQPNKNFAAFRRRLFLDRRAKDKMVQSNLRLVVSIAKKYMNRGLSFQDLIQEGSLGLIRAAEKFDHEKGYKFSTYATWWIRQAITRAIADQSRTIRLPVHLYETISRIKKTTKLLSQEMRRKPTEEEIAEKMEMTIEKLRFIAKSAQLPISLETPIGKEEDSRLGDFIEADGETPEDEVSKNLLREDLENVLDTLSPRERDVLRLRYGLDDGRMKTLEEIGQIFNVTRERIRQIEAKALRKLRHPNRNSILKEYIR.

The sigma-70 factor domain-2 stretch occupies residues 193-263 (MVQSNLRLVV…TRAIADQSRT (71 aa)). The Interaction with polymerase core subunit RpoC signature appears at 217–220 (DLIQ). A sigma-70 factor domain-3 region spans residues 272-347 (ETISRIKKTT…EADGETPEDE (76 aa)). The sigma-70 factor domain-4 stretch occupies residues 360–413 (VLDTLSPRERDVLRLRYGLDDGRMKTLEEIGQIFNVTRERIRQIEAKALRKLRH). The H-T-H motif DNA-binding region spans 386 to 405 (LEEIGQIFNVTRERIRQIEA).

Belongs to the sigma-70 factor family. RpoD/SigA subfamily. Interacts transiently with the RNA polymerase catalytic core.

The protein localises to the cytoplasm. Sigma factors are initiation factors that promote the attachment of RNA polymerase to specific initiation sites and are then released. This sigma factor is the primary sigma factor during exponential growth. In Synechocystis sp. (strain ATCC 27184 / PCC 6803 / Kazusa), this protein is RNA polymerase sigma factor SigA.